Consider the following 213-residue polypeptide: Nucleoside triphosphate pyrophosphatase (213 aa).

Asp-79 (proton acceptor) is an active-site residue.

The protein belongs to the Maf family. It depends on a divalent metal cation as a cofactor.

It is found in the cytoplasm. The enzyme catalyses a ribonucleoside 5'-triphosphate + H2O = a ribonucleoside 5'-phosphate + diphosphate + H(+). It carries out the reaction a 2'-deoxyribonucleoside 5'-triphosphate + H2O = a 2'-deoxyribonucleoside 5'-phosphate + diphosphate + H(+). Functionally, nucleoside triphosphate pyrophosphatase. May have a dual role in cell division arrest and in preventing the incorporation of modified nucleotides into cellular nucleic acids. In Rhodococcus erythropolis (strain PR4 / NBRC 100887), this protein is Nucleoside triphosphate pyrophosphatase.